Consider the following 98-residue polypeptide: MSMVYFNIFLAFIVSLVGLLMYRSHLMSSLLCLEGMMLSLFVMMSVTILNNHFTLASMAPIILLVFAACEAALGLSLLVMVSNTYGTDYVQNLNLLQC.

Transmembrane regions (helical) follow at residues 1 to 21 (MSMV…GLLM), 29 to 49 (SLLC…VTIL), and 61 to 81 (IILL…LVMV).

It belongs to the complex I subunit 4L family. As to quaternary structure, core subunit of respiratory chain NADH dehydrogenase (Complex I) which is composed of 45 different subunits.

Its subcellular location is the mitochondrion inner membrane. It catalyses the reaction a ubiquinone + NADH + 5 H(+)(in) = a ubiquinol + NAD(+) + 4 H(+)(out). Core subunit of the mitochondrial membrane respiratory chain NADH dehydrogenase (Complex I) which catalyzes electron transfer from NADH through the respiratory chain, using ubiquinone as an electron acceptor. Part of the enzyme membrane arm which is embedded in the lipid bilayer and involved in proton translocation. The protein is NADH-ubiquinone oxidoreductase chain 4L (MT-ND4L) of Callorhinus ursinus (Northern fur seal).